Here is a 214-residue protein sequence, read N- to C-terminus: Adenylate kinase (214 aa).

10 to 15 lines the ATP pocket; the sequence is GAGKGT. Positions 30–59 are NMP; sequence STGDMLRAAVKAGTPLGLEAKKVMDAGQLV. AMP is bound by residues Thr31, Arg36, 57 to 59, 85 to 88, and Gln92; these read QLV and GFPR. The tract at residues 122-159 is LID; it reads GRRVHPGSGRVYHVVFNPPKVEGKDDVTGEDLAIRPDD. ATP is bound by residues Arg123 and 132 to 133; that span reads VY. AMP-binding residues include Arg156 and Arg167. Residue Gln200 participates in ATP binding.

The protein belongs to the adenylate kinase family. As to quaternary structure, monomer.

Its subcellular location is the cytoplasm. The enzyme catalyses AMP + ATP = 2 ADP. Its pathway is purine metabolism; AMP biosynthesis via salvage pathway; AMP from ADP: step 1/1. Its function is as follows. Catalyzes the reversible transfer of the terminal phosphate group between ATP and AMP. Plays an important role in cellular energy homeostasis and in adenine nucleotide metabolism. This is Adenylate kinase from Shewanella oneidensis (strain ATCC 700550 / JCM 31522 / CIP 106686 / LMG 19005 / NCIMB 14063 / MR-1).